The primary structure comprises 539 residues: Chaperonin GroEL 1 (539 aa).

Residues 30-33 (TLGP), Lys-51, 87-91 (DGTTT), Gly-415, 480-482 (NAA), and Asp-496 contribute to the ATP site.

Belongs to the chaperonin (HSP60) family. Forms a cylinder of 14 subunits composed of two heptameric rings stacked back-to-back. Interacts with the co-chaperonin GroES.

Its subcellular location is the cytoplasm. It catalyses the reaction ATP + H2O + a folded polypeptide = ADP + phosphate + an unfolded polypeptide.. Functionally, together with its co-chaperonin GroES, plays an essential role in assisting protein folding. The GroEL-GroES system forms a nano-cage that allows encapsulation of the non-native substrate proteins and provides a physical environment optimized to promote and accelerate protein folding. This is Chaperonin GroEL 1 from Erythrobacter litoralis (strain HTCC2594).